The following is a 205-amino-acid chain: Guanylate kinase (205 aa).

One can recognise a Guanylate kinase-like domain in the interval 7-185 (GNIFIISAAS…AEEDLRHIVN (179 aa)). Residue 14-21 (AASGTGKT) coordinates ATP.

Belongs to the guanylate kinase family.

Its subcellular location is the cytoplasm. The catalysed reaction is GMP + ATP = GDP + ADP. In terms of biological role, essential for recycling GMP and indirectly, cGMP. The chain is Guanylate kinase (gmk) from Neisseria meningitidis serogroup A / serotype 4A (strain DSM 15465 / Z2491).